We begin with the raw amino-acid sequence, 592 residues long: Probable auxin efflux carrier component 1c (592 aa).

Residues 1–6 (MITGAD) are Extracellular-facing. A helical membrane pass occupies residues 7–27 (FYHVMTAMVPLYVAMILAYGS). Topologically, residues 28–38 (VKWWRIFTPDQ) are cytoplasmic. Residues 39–59 (CSGINRFVALFAVPLLSFHFI) traverse the membrane as a helical segment. V51 is a binding site for (indol-3-yl)acetate. The Extracellular segment spans residues 60 to 70 (STNNPYTMNLR). Residues 71–91 (FIAADTLQKLIVLALLTLWSH) form a helical membrane-spanning segment. Residues 92–100 (LSRRGSLEW) are Cytoplasmic-facing. Residues 101–121 (TITLFSLSTLPNTLVMGIPLL) form a helical membrane-spanning segment. 2 residues coordinate (indol-3-yl)acetate: N112 and L114. Residues 122 to 131 (KGMYGEFSGS) are Extracellular-facing. A helical membrane pass occupies residues 132–152 (LMVQIVVLQCIIWYTLMLFMF). Y145 contributes to the (indol-3-yl)acetate binding site. Over 153–452 (EYRGARILIT…LIRNPNTYSS (300 aa)) the chain is Cytoplasmic. Disordered regions lie at residues 214–236 (RSDV…SNLT) and 282–331 (GATP…AKGE). Residues 224–236 (GFSSTTPRPSNLT) are compositionally biased toward polar residues. Residues 309 to 318 (APNPAMAAPP) are compositionally biased toward pro residues. Residues 453–473 (LIGLIWSLVCFRWNFEMPAII) form a helical membrane-spanning segment. At 474–476 (LKS) the chain is on the extracellular side. A helical membrane pass occupies residues 477-497 (ISILSDAGLGMAMFSLGLFMA). Topologically, residues 498–511 (LQPRIIACGNKVAT) are cytoplasmic. A helical transmembrane segment spans residues 512–532 (FAMAVRFLTGPAVMAAASIAV). At 533 to 537 (GLRGT) the chain is on the extracellular side. Residues 538 to 558 (LLHVAIVQAALPQGIVPFVFA) form a helical membrane-spanning segment. (indol-3-yl)acetate is bound by residues I552 and V553. Residues 559–571 (KEYSVHPDILSTA) lie on the Cytoplasmic side of the membrane. Residues 572 to 592 (VIFGMLIALPITLVYYILLGL) traverse the membrane as a helical segment.

Belongs to the auxin efflux carrier (TC 2.A.69.1) family. As to quaternary structure, homodimer. Expressed at low levels in roots and leaves. Expressed in roots, stem bases, stems, leaves and young panicles.

It localises to the membrane. In terms of biological role, may act as a component of the auxin efflux carrier. The sequence is that of Probable auxin efflux carrier component 1c from Oryza sativa subsp. japonica (Rice).